A 671-amino-acid polypeptide reads, in one-letter code: Copper amine oxidase 1 (671 aa).

Residues 3–106 (PHPLAILSEE…QHRVVGKEHH (104 aa)) form an N2 region. The interval 107–211 (ASLTLSEFDT…DRPATGGKGE (105 aa)) is N3. 319–330 (AFDFGDGGGGNM) contributes to the substrate binding site. The active-site Proton acceptor is the Asp-321. Cys-340 and Cys-366 are joined by a disulfide. 402–407 (LANYEY) provides a ligand contact to substrate. The active-site Schiff-base intermediate with substrate; via topaquinone is Tyr-405. A 2',4',5'-topaquinone modification is found at Tyr-405. Cu cation is bound by residues His-455 and His-457. Residue Asp-464 participates in Mn(2+) binding. N-linked (GlcNAc...) asparagine glycosylation is present at Asn-471. Asp-606 contacts Mn(2+). Residue His-617 participates in Cu cation binding.

It belongs to the copper/topaquinone oxidase family. As to quaternary structure, homodimer. Cu cation is required as a cofactor. Zn(2+) serves as cofactor. The cofactor is L-topaquinone. It depends on Mn(2+) as a cofactor. In terms of processing, topaquinone (TPQ) is generated by copper-dependent autoxidation of a specific tyrosyl residue.

The catalysed reaction is histamine + O2 + H2O = imidazole-4-acetaldehyde + H2O2 + NH4(+). In Aspergillus niger, this protein is Copper amine oxidase 1 (AO-I).